The sequence spans 752 residues: Probable beta-glucosidase D (752 aa).

An N-terminal signal peptide occupies residues 1 to 18 (MRFVSLAVGAALLGAAGA). 2 N-linked (GlcNAc...) asparagine glycosylation sites follow: Asn-187 and Asn-237. The active site involves Asp-265. Residues Asn-299, Asn-343, Asn-441, Asn-510, Asn-532, Asn-571, Asn-586, Asn-638, Asn-661, and Asn-743 are each glycosylated (N-linked (GlcNAc...) asparagine).

It belongs to the glycosyl hydrolase 3 family.

The protein localises to the secreted. It carries out the reaction Hydrolysis of terminal, non-reducing beta-D-glucosyl residues with release of beta-D-glucose.. Its pathway is glycan metabolism; cellulose degradation. Its function is as follows. Beta-glucosidases are one of a number of cellulolytic enzymes involved in the degradation of cellulosic biomass. Catalyzes the last step releasing glucose from the inhibitory cellobiose. This is Probable beta-glucosidase D (bglD) from Aspergillus flavus (strain ATCC 200026 / FGSC A1120 / IAM 13836 / NRRL 3357 / JCM 12722 / SRRC 167).